The sequence spans 458 residues: MSKDKLWGGRFTQPTDKFVEEFTASINFDKRLYHQDIRGSIAHATMLGKQGIIPVADVESIVSGLKTILEQIEAGEFDFSVSLEDIHMNIEARLSEKIGDAGKRLHTGRSRNDQVALDIRLYLRDELVEVSAYIDLLIDAIIHQAEENLGVIMPGFTHLQTAQPILFSHHMMAYHEMLKRDKARMEDCLKRTNVLPLGAGALAGTTFPIDREYVAELLDFDGVTRNSLDSVSDRDFAMEFCAASSILMVHLSRFSEELILWSTSEFKFVELSDSFCTGSSIMPQKKNPDVPELVRGKTGRVNGNLVALLTLMKSLPLAYNKDMQEDKEPLFDTIDTVKGCLKVFADMVREMKINPERMKTAAAAGFSTATDVADYLVRKGIPFRDAHEIVGKTVRYCIENEMDIPELSLAEWQLFSGRIEEDIFESITLQASVNARRATGGTALERVRAEIARAKEGR.

The protein belongs to the lyase 1 family. Argininosuccinate lyase subfamily.

Its subcellular location is the cytoplasm. It carries out the reaction 2-(N(omega)-L-arginino)succinate = fumarate + L-arginine. Its pathway is amino-acid biosynthesis; L-arginine biosynthesis; L-arginine from L-ornithine and carbamoyl phosphate: step 3/3. In Citrifermentans bemidjiense (strain ATCC BAA-1014 / DSM 16622 / JCM 12645 / Bem) (Geobacter bemidjiensis), this protein is Argininosuccinate lyase.